Consider the following 570-residue polypeptide: Protein translocase subunit SecD (570 aa).

Over residues 104-117 (GANATGTPSASETG) the composition is skewed to polar residues. Positions 104–198 (GANATGTPSA…SASASGDDAT (95 aa)) are disordered. The segment covering 122-146 (KATDKATDKATDKATDGDKATDGDK) has biased composition (basic and acidic residues). Low complexity-rich tracts occupy residues 147 to 161 (ASGT…SATS) and 172 to 196 (ADPS…SGDD). The next 5 helical transmembrane spans lie at 370 to 390 (AGLI…LFYY), 395 to 415 (FIAV…MALL), 419 to 439 (IGFA…GITA), 474 to 494 (ILVS…VTVG), and 498 to 518 (GFAF…FLFT). Residues 540–570 (LDPKALGAKPPLRRTRRPSRPAAGPVDPKEA) are disordered.

It belongs to the SecD/SecF family. SecD subfamily. As to quaternary structure, forms a complex with SecF. Part of the essential Sec protein translocation apparatus which comprises SecA, SecYEG and auxiliary proteins SecDF. Other proteins may also be involved.

Its subcellular location is the cell membrane. Its function is as follows. Part of the Sec protein translocase complex. Interacts with the SecYEG preprotein conducting channel. SecDF uses the proton motive force (PMF) to complete protein translocation after the ATP-dependent function of SecA. The polypeptide is Protein translocase subunit SecD (Streptomyces coelicolor (strain ATCC BAA-471 / A3(2) / M145)).